A 921-amino-acid polypeptide reads, in one-letter code: Isoleucine--tRNA ligase (921 aa).

The short motif at 57–67 (PYANGDIHMGH) is the 'HIGH' region element. Glu552 provides a ligand contact to L-isoleucyl-5'-AMP. Residues 593 to 597 (KMSKS) carry the 'KMSKS' region motif. Residue Lys596 coordinates ATP. The Zn(2+) site is built by Cys888, Cys891, Cys908, and Cys911.

Belongs to the class-I aminoacyl-tRNA synthetase family. IleS type 1 subfamily. As to quaternary structure, monomer. Requires Zn(2+) as cofactor.

It is found in the cytoplasm. The enzyme catalyses tRNA(Ile) + L-isoleucine + ATP = L-isoleucyl-tRNA(Ile) + AMP + diphosphate. Its function is as follows. Catalyzes the attachment of isoleucine to tRNA(Ile). As IleRS can inadvertently accommodate and process structurally similar amino acids such as valine, to avoid such errors it has two additional distinct tRNA(Ile)-dependent editing activities. One activity is designated as 'pretransfer' editing and involves the hydrolysis of activated Val-AMP. The other activity is designated 'posttransfer' editing and involves deacylation of mischarged Val-tRNA(Ile). This Bacillus mycoides (strain KBAB4) (Bacillus weihenstephanensis) protein is Isoleucine--tRNA ligase.